Consider the following 486-residue polypeptide: Homoserine O-acetyltransferase (486 aa).

In terms of domain architecture, AB hydrolase-1 spans 66–436 (NVLVICHALT…PEGHDAFLLE (371 aa)). The active-site Nucleophile is the serine 162. A disordered region spans residues 248–281 (KFSRRSPSIAQQQKAQREETRKPSTVSEHSLQIH). 2 stretches are compositionally biased toward polar residues: residues 250–261 (SRRSPSIAQQQK) and 270–280 (PSTVSEHSLQI). Catalysis depends on residues aspartate 401 and histidine 430.

This sequence belongs to the AB hydrolase superfamily. MetX family.

The protein resides in the cytoplasm. The enzyme catalyses L-homoserine + acetyl-CoA = O-acetyl-L-homoserine + CoA. The protein operates within amino-acid biosynthesis; L-methionine biosynthesis via de novo pathway; O-acetyl-L-homoserine from L-homoserine: step 1/1. Commits homoserine to the methionine biosynthesis pathway by catalyzing its O-acetylation. The chain is Homoserine O-acetyltransferase (MET2) from Saccharomyces cerevisiae (strain ATCC 204508 / S288c) (Baker's yeast).